The primary structure comprises 355 residues: UDP-3-O-acylglucosamine N-acyltransferase (355 aa).

The Proton acceptor role is filled by His252.

Belongs to the transferase hexapeptide repeat family. LpxD subfamily. Homotrimer.

It carries out the reaction a UDP-3-O-[(3R)-3-hydroxyacyl]-alpha-D-glucosamine + a (3R)-hydroxyacyl-[ACP] = a UDP-2-N,3-O-bis[(3R)-3-hydroxyacyl]-alpha-D-glucosamine + holo-[ACP] + H(+). Its pathway is bacterial outer membrane biogenesis; LPS lipid A biosynthesis. Functionally, catalyzes the N-acylation of UDP-3-O-acylglucosamine using 3-hydroxyacyl-ACP as the acyl donor. Is involved in the biosynthesis of lipid A, a phosphorylated glycolipid that anchors the lipopolysaccharide to the outer membrane of the cell. The chain is UDP-3-O-acylglucosamine N-acyltransferase from Polynucleobacter necessarius subsp. necessarius (strain STIR1).